Reading from the N-terminus, the 62-residue chain is Large ribosomal subunit protein eL24 (62 aa).

Cysteine 6, cysteine 9, cysteine 32, and cysteine 36 together coordinate Zn(2+). A C4-type zinc finger spans residues 6–36 (CSFCGELLEPGTGLLFAKRDGSTYYFCSSKC).

This sequence belongs to the eukaryotic ribosomal protein eL24 family. In terms of assembly, part of the 50S ribosomal subunit. Forms a cluster with proteins L3 and L14. Zn(2+) serves as cofactor.

Functionally, binds to the 23S rRNA. This is Large ribosomal subunit protein eL24 from Methanococcoides burtonii (strain DSM 6242 / NBRC 107633 / OCM 468 / ACE-M).